Here is a 620-residue protein sequence, read N- to C-terminus: Protein translocase subunit SecD (620 aa).

6 helical membrane passes run 10 to 30, 464 to 484, 488 to 507, 511 to 533, 555 to 575, and 582 to 602; these read YLLILAVLAVGFIYSAPNLYP, LWGMLFVSLFIIVIYRFFGVI, ALAFNMVMLVALMSILGATL, GIAGIVLTMGMAVDANVLIFSRI, FTAILDANLTSLLVGGILYAM, and GFAVTMSLGIITSMFTAIMVT.

Belongs to the SecD/SecF family. SecD subfamily. Forms a complex with SecF. Part of the essential Sec protein translocation apparatus which comprises SecA, SecYEG and auxiliary proteins SecDF-YajC and YidC.

Its subcellular location is the cell inner membrane. In terms of biological role, part of the Sec protein translocase complex. Interacts with the SecYEG preprotein conducting channel. SecDF uses the proton motive force (PMF) to complete protein translocation after the ATP-dependent function of SecA. The protein is Protein translocase subunit SecD of Pseudomonas aeruginosa (strain ATCC 15692 / DSM 22644 / CIP 104116 / JCM 14847 / LMG 12228 / 1C / PRS 101 / PAO1).